A 126-amino-acid chain; its full sequence is MNLIAVLEQEEIKRLTGDKTMPEFAPGDTVVVSVNVVEGTRKRVQAYEGVVIAKRNRGLNSSFIVRKISSGEAVERTFQLYSPQIAGIEVKRRGDVRRAKLYYLRSRSGKSARIKEKLVTKQAKSA.

It belongs to the bacterial ribosomal protein bL19 family.

Its function is as follows. This protein is located at the 30S-50S ribosomal subunit interface and may play a role in the structure and function of the aminoacyl-tRNA binding site. This Bordetella petrii (strain ATCC BAA-461 / DSM 12804 / CCUG 43448) protein is Large ribosomal subunit protein bL19.